A 376-amino-acid polypeptide reads, in one-letter code: Alpha-2,8-sialyltransferase 8E (376 aa).

Residues 17 to 37 form a helical membrane-spanning segment; that stretch reads TLLFIFICAFALVTLLQQILY. An N-linked (GlcNAc...) asparagine glycan is attached at asparagine 56. 2 cysteine pairs are disulfide-bonded: cysteine 164–cysteine 313 and cysteine 178–cysteine 373. Residues asparagine 192 and 214–216 contribute to the substrate site; that span reads NPS. Asparagine 241 carries N-linked (GlcNAc...) asparagine glycosylation. Residue 300-302 participates in substrate binding; sequence STG. Histidine 348 (proton donor/acceptor) is an active-site residue.

This sequence belongs to the glycosyltransferase 29 family. As to expression, expressed in liver.

It is found in the golgi apparatus membrane. It carries out the reaction a ganglioside GT1b (d18:1(4E)) + CMP-N-acetyl-beta-neuraminate = a ganglioside GQ1b (d18:1(4E)) + CMP + H(+). The enzyme catalyses a ganglioside GQ1c (d18:1(4E)) + CMP-N-acetyl-beta-neuraminate = a ganglioside GP1c (d18:1(4E)) + CMP + H(+). The catalysed reaction is a ganglioside GD3 (d18:1(4E)) + CMP-N-acetyl-beta-neuraminate = a ganglioside GT3 (d18:1(4E)) + CMP + H(+). It catalyses the reaction a ganglioside GD1a (d18:1(4E)) + CMP-N-acetyl-beta-neuraminate = a ganglioside GT1a (d18:1(4E)) + CMP + H(+). It carries out the reaction a ganglioside GM1b (d18:1(4E)) + CMP-N-acetyl-beta-neuraminate = a ganglioside GD1c (d18:1(4E)) + CMP + H(+). It participates in protein modification; protein glycosylation. In terms of biological role, involved in the synthesis of gangliosides GD1c, GT1a, GQ1b, GP1c and GT3 from GD1a, GT1b, GM1b and GD3 respectively. In Rattus norvegicus (Rat), this protein is Alpha-2,8-sialyltransferase 8E.